The primary structure comprises 700 residues: Mei4-dependent protein 6 (700 aa).

Kelch repeat units follow at residues 276-322 (CIYL…MVID), 327-381 (KLYL…FDHG), 390-439 (IVYV…KIER), 452-499 (KLYI…FCQR), 508-558 (RIFT…SRFG), and 569-619 (IIYL…RFHE).

The polypeptide is Mei4-dependent protein 6 (mde6) (Schizosaccharomyces pombe (strain 972 / ATCC 24843) (Fission yeast)).